The following is a 156-amino-acid chain: Large ribosomal subunit protein uL15 (156 aa).

The segment at 25 to 48 (RGIGCGKGKTSGRGHKGQKARSGV) is disordered. The span at 34–43 (TSGRGHKGQK) shows a compositional bias: basic residues.

Belongs to the universal ribosomal protein uL15 family. In terms of assembly, part of the 50S ribosomal subunit.

Functionally, binds to the 23S rRNA. This Wolbachia pipientis wMel protein is Large ribosomal subunit protein uL15.